A 271-amino-acid polypeptide reads, in one-letter code: MWELRSIAFSRAVLAEFLATLLFVFFGLGSALNWPQALPSVLQIAMAFGLAIGTLVQALGHVSGAHINPAVTVACLVGCHVSFLRAVFYVAAQLLGAVAGAALLHEITPPAIRGDLAVNALNNNSTAGQAVTVELFLTLQLVLCIFASTDERRGDNVGTPALSIGFSVALGHLLGIHYTGCSMNPARSLAPAIVTGKFDDHWVFWIGPLVGAIVASLLYNYVLFPPAKSLSERLAVLKGLEPDTDWEEREVRRRQSVELHSPQSLPRGSKA.

Topologically, residues 1–11 (MWELRSIAFSR) are cytoplasmic. Residues 12-32 (AVLAEFLATLLFVFFGLGSAL) traverse the membrane as a helical segment. At 33 to 40 (NWPQALPS) the chain is on the extracellular side. Residues 41–59 (VLQIAMAFGLAIGTLVQAL) traverse the membrane as a helical segment. At 60–64 (GHVSG) the chain is on the cytoplasmic side. Positions 65–74 (AHINPAVTVA) form an intramembrane region, discontinuously helical. Positions 68–70 (NPA) match the NPA 1 motif. Over 75–85 (CLVGCHVSFLR) the chain is Cytoplasmic. Residues 86–107 (AVFYVAAQLLGAVAGAALLHEI) traverse the membrane as a helical segment. The Extracellular segment spans residues 108–127 (TPPAIRGDLAVNALNNNSTA). Asn-123 carries N-linked (GlcNAc...) asparagine glycosylation. A helical membrane pass occupies residues 128 to 148 (GQAVTVELFLTLQLVLCIFAS). At 149–156 (TDERRGDN) the chain is on the cytoplasmic side. The helical transmembrane segment at 157-176 (VGTPALSIGFSVALGHLLGI) threads the bilayer. Residues 177 to 180 (HYTG) are Extracellular-facing. An intramembrane region (discontinuously helical) is located at residues 181 to 193 (CSMNPARSLAPAI). The short motif at 184–186 (NPA) is the NPA 2 element. The Extracellular segment spans residues 194-201 (VTGKFDDH). A helical membrane pass occupies residues 202–222 (WVFWIGPLVGAIVASLLYNYV). The Cytoplasmic portion of the chain corresponds to 223–271 (LFPPAKSLSERLAVLKGLEPDTDWEEREVRRRQSVELHSPQSLPRGSKA). A disordered region spans residues 251–271 (VRRRQSVELHSPQSLPRGSKA). Ser-256 carries the phosphoserine modification. Positions 261–271 (SPQSLPRGSKA) are enriched in polar residues.

It belongs to the MIP/aquaporin (TC 1.A.8) family. In terms of assembly, homotetramer. Ser-256 phosphorylation is necessary and sufficient for expression at the apical membrane. Endocytosis is not phosphorylation-dependent. Post-translationally, N-glycosylated.

It is found in the apical cell membrane. The protein resides in the basolateral cell membrane. Its subcellular location is the cell membrane. It localises to the cytoplasmic vesicle membrane. The protein localises to the golgi apparatus. It is found in the trans-Golgi network membrane. The catalysed reaction is H2O(in) = H2O(out). It catalyses the reaction glycerol(in) = glycerol(out). Forms a water-specific channel that provides the plasma membranes of renal collecting duct with high permeability to water, thereby permitting water to move in the direction of an osmotic gradient. Could also be permeable to glycerol. This Bos taurus (Bovine) protein is Aquaporin-2.